The primary structure comprises 1664 residues: MYND-type zinc finger-containing chromatin reader Zmynd8 (1664 aa).

Composition is skewed to low complexity over residues 1–16 (MEST…SLKS), 30–40 (SPQPQLQSSSL), and 61–84 (SAPP…INVG). 3 disordered regions span residues 1-84 (MEST…INVG), 251-271 (SLSN…LRSE), and 295-323 (LALN…KTPE). The span at 258-271 (NDDKGPRRSNLRSE) shows a compositional bias: basic and acidic residues. Over residues 296-308 (ALNTSGEGESSLF) the composition is skewed to polar residues. A compositionally biased stretch (low complexity) spans 309-320 (SDASDTKTTTAK). The PHD-type zinc finger occupies 343–389 (DPFCWKCRGCGKLMPCSKCLRSFHSYCVRPATTKFDSSWKCPECQVI). Zn(2+) contacts are provided by C346, C349, C358, C361, H366, C369, C383, and C386. The region spanning 401 to 504 (VSVDLLSQLL…KVCRQEANEI (104 aa)) is the Bromo domain. Zn(2+) contacts are provided by C507, C510, and C525. Residues 528–579 (PHLLLWAKLKGFPYWPAKAMGSSNSTLVNVRFFGKHDRAFVPVKDCFLYSAQ) form the PWWP domain. Disordered stretches follow at residues 672–693 (KTKA…KKLS), 747–815 (ESVE…QNEN), 857–905 (KIPR…RQQE), and 919–1139 (TEVM…TNTS). Polar residues predominate over residues 676 to 690 (TESGNESDQSPSPTK). Basic residues predominate over residues 775-784 (HKRKSKHARK). Residues 785–800 (QHDNQDNQIEEAEKTG) are compositionally biased toward basic and acidic residues. The segment covering 874–884 (IPLPTAPPPKQ) has biased composition (pro residues). Polar residues predominate over residues 935–952 (PANQPQTDQVPLQQETIT). Low complexity predominate over residues 953-962 (AQPESQMPAA). A compositionally biased stretch (pro residues) spans 1006–1019 (PPMPLPMPPPPPLP). The segment covering 1037 to 1053 (TTIQRVSQKQGGKSTDT) has biased composition (polar residues). The segment covering 1073–1097 (SPTHSPLLSTAPSPSASPKPTSTLA) has biased composition (low complexity). Zn(2+)-binding residues include C1399, C1402, C1410, C1411, C1417, C1421, H1429, and C1433. The MYND-type zinc-finger motif lies at 1399 to 1433 (CANCMREAQLYCCWNTSYCDYPCQQLHWPGHSATC). The interval 1613–1648 (VPKATGRSGKNNSRMRQTYSNNINNSNPQGMRCNNN) is disordered. Residues 1620–1648 (SGKNNSRMRQTYSNNINNSNPQGMRCNNN) are compositionally biased toward polar residues.

The protein resides in the nucleus. It localises to the chromosome. Its function is as follows. Chromatin reader that recognizes specific histone signatures to regulate transcription. Plays a role in neuronal development. This Drosophila melanogaster (Fruit fly) protein is MYND-type zinc finger-containing chromatin reader Zmynd8.